The chain runs to 1047 residues: MELCQPTSLSDHDQPASGPQRGVMGLVGPDAPRGWSEEPEEHAQLQRWPEGPNAPICWPEEVEEPHAPSRWAKEPNAPRCSSQEPDESCHLAEELEESDSPRCWPQEPDTPCHLAKELEEPDAPRCLPQEPDTPCYLAKELEEPNIPRCWPQEPDVPCHLAKELEEPDAPRCWPQEPDAFCHLLKEVEEPDALRCWLQGPDAPCHLAKELEDLDSPRCWPQEPDESCHLAKELEEPDAPCHLAKELEEPDAPRCWPQEPDVPCLLAKKWEESDAPCLLTEELEEPDALHCWPQESEAPCLLAKELEEPDASHSCPQEADTGCLSAKEPEEPDVSHLWQGVPDAPCLLVKEPEEADALHCCWPEESEEPDALNPPCFWANEPDEPDPSRCWSEEPQVLCLWPEEQNTKRCWQEEPDAPCFWPEDREEPIVSCLQFKEPEKPKVRSSWPEELEDCCPTRGLPLEPLLADGELLQACPGPPSDPGPALSLPSEPGTAQEEGARLRAVFDALDRDGDGFVRIEDFIQFATVYGAEQVKDLTQYLDPSGLGVISFEDFYQGIVAIRNGDPDGQLYSVEPVQDEETPACADEFDDFVTYEANEVTDSAYMGSESTYSECETFTDEDTSTLVHPELQPEGDVDSAGGSGVPSECLDTMEEPDHGALLLLPGRSRPHSQAVVMVIGSEEHFEDYGEGNEAELSPETLCDGDGEDPAFLTPSPAKRLSSRKVARYLHQSGTLTMEALEDPPPEPVECPEEDIADKVIFLERRVSELEKDSAAAGEQHGRLRQENLQLVHRANALEEQLKEQEFRAQEKVLEETRKQKELLCKMEREKSIEIENLQARLQQLDEENSELRSCTPCLKANIERLEEEKQKMLDEIEELTQRLSEEQENKRKMGDRLSHERHQFQRDKEATQELIEDLRKQLEHLQLLRLEVEQRRGRSSSLGLQEYNSRARESELEQEVRRLKQDNRNLKEQNDELNGQIITLSIQGAKSLFSTSFSESLAAEISSVSRDELMEAIQKQEEINFRLQDYIDRIIVAILETNPSILEVK.

Disordered regions lie at residues 1–107 (MELC…WPQE), 311–335 (SHSC…DVSH), and 475–496 (PGPP…TAQE). The segment covering 64 to 73 (EPHAPSRWAK) has biased composition (basic and acidic residues). EF-hand domains follow at residues 496–531 (EEGA…YGAE) and 528–563 (YGAE…IRNG). Asp-509, Asp-511, Asp-513, Asp-520, Asp-541, Ser-543, and Asp-552 together coordinate Ca(2+). Phosphoserine occurs at positions 641, 765, and 829. Residues 750 to 985 (EEDIADKVIF…NGQIITLSIQ (236 aa)) adopt a coiled-coil conformation. An ARF-binding domain (ABD) region spans residues 775–879 (GEQHGRLRQE…MLDEIEELTQ (105 aa)). A disordered region spans residues 882–906 (SEEQENKRKMGDRLSHERHQFQRDK). Residues Ser-938 and Ser-939 each carry the phosphoserine modification. The FIP-RBD domain occupies 985–1047 (QGAKSLFSTS…ETNPSILEVK (63 aa)).

Homodimer. Interacts with RAB11A; the interaction is direct and is required for the recruitment to endosomes. Interacts with RAB11B. Forms a ternary complex with RAB11A and dynein intermediate chain DYNC1LI1; RAB11FIP3 links RAB11A to dynein and the interaction regulates endocytic trafficking. Interacts with dynein intermediate chain and dynactin (DCTN1); the interaction activates dynein processivity. Interacts with ARF6 and EXOC7; the interaction serves for recruitment and tethering of recycling endosomes-derived vesicles to the cleavage furrow/midbody. Interacts with RACGAP1/MgcRacGAP; the interaction occurs at late telophase and is required for recruitment and tethering of recycling endosomes-derived vesicles to the cleavage furrow/midbody. Forms a complex with RAB11A and Rabin8/RAB3IP, probably a heterohexamer with two of each protein subunit, where RAB3IP and RAB11FIP3 simultaneously bind to RAB11A; the complex promotes preciliary trafficking. Forms a complex containing RAB11A, ASAP1, RAB3IP, RAP11FIP3 and ARF4; the complex promotes preciliary trafficking; the complex binds to RHO in photoreceptor cells and promotes RHO ciliary transport. Interacts with RAB11FIP4. Interacts with RAB25.

It is found in the recycling endosome membrane. The protein localises to the cytoplasm. Its subcellular location is the cytoskeleton. It localises to the microtubule organizing center. The protein resides in the centrosome. It is found in the cleavage furrow. The protein localises to the midbody. Its subcellular location is the golgi apparatus membrane. It localises to the golgi apparatus. The protein resides in the trans-Golgi network membrane. In terms of biological role, downstream effector molecule for Rab11 GTPase which is involved in endocytic trafficking, cytokinesis and intracellular ciliogenesis by participating in membrane delivery. Recruited by Rab11 to endosomes where it links Rab11 to dynein motor complex. The functional Rab11-RAB11FIP3-dynein complex regulates the movement of peripheral sorting endosomes (SE) along microtubule tracks toward the microtubule organizing center/centrosome, generating the endocytic recycling compartment (ERC) during interphase of cell cycle. Facilitates the interaction between dynein and dynactin and activates dynein processivity. Binding with ASAP1 is needed to regulate the pericentrosomal localization of recycling endosomes. The Rab11-RAB11FIP3 complex is also implicated in the transport during telophase of vesicles derived from recycling endosomes to the cleavage furrow via centrosome-anchored microtubules, where the vesicles function to deliver membrane during late cytokinesis and abscission. The recruitment of Rab11-RAB11FIP3-containing endosomes to the cleavage furrow and tethering to the midbody is co-mediated by RAB11FIP3 interaction with ARF6-exocyst and RACGAP1-MKLP1 tethering complexes. Also involved in the Rab11-Rabin8-Rab8 ciliogenesis cascade by facilitating the orderly assembly of a ciliary targeting complex containing Rab11, ASAP1, Rabin8/RAB3IP, RAB11FIP3 and ARF4, which directs preciliary vesicle trafficking to mother centriole and ciliogenesis initiation. Also promotes the activity of Rab11 and ASAP1 in the ARF4-dependent Golgi-to-cilia transport of the sensory receptor rhodopsin. Competes with WDR44 for binding to Rab11, which controls intracellular ciliogenesis pathway. May play a role in breast cancer cell motility by regulating actin cytoskeleton. In Mus musculus (Mouse), this protein is Rab11 family-interacting protein 3.